The following is a 103-amino-acid chain: Large ribosomal subunit protein bL21 (103 aa).

The protein belongs to the bacterial ribosomal protein bL21 family. Part of the 50S ribosomal subunit. Contacts protein L20.

Functionally, this protein binds to 23S rRNA in the presence of protein L20. The chain is Large ribosomal subunit protein bL21 from Desulforudis audaxviator (strain MP104C).